The sequence spans 220 residues: Deoxyribose-phosphate aldolase (220 aa).

Asp-89 (proton donor/acceptor) is an active-site residue. The active-site Schiff-base intermediate with acetaldehyde is Lys-151. Lys-180 (proton donor/acceptor) is an active-site residue.

It belongs to the DeoC/FbaB aldolase family. DeoC type 1 subfamily.

The protein resides in the cytoplasm. It carries out the reaction 2-deoxy-D-ribose 5-phosphate = D-glyceraldehyde 3-phosphate + acetaldehyde. It participates in carbohydrate degradation; 2-deoxy-D-ribose 1-phosphate degradation; D-glyceraldehyde 3-phosphate and acetaldehyde from 2-deoxy-alpha-D-ribose 1-phosphate: step 2/2. Its function is as follows. Catalyzes a reversible aldol reaction between acetaldehyde and D-glyceraldehyde 3-phosphate to generate 2-deoxy-D-ribose 5-phosphate. The sequence is that of Deoxyribose-phosphate aldolase from Streptococcus pneumoniae serotype 19F (strain G54).